A 185-amino-acid chain; its full sequence is NAD(P)H-dependent FMN reductase PA1204 (185 aa).

FMN-binding positions include 13–20 and 81–83; these read SLRSGSYN and YNY. 115-122 contributes to the NAD(+) binding site; that stretch reads SAGRFGTA.

This sequence belongs to the SsuE family. In terms of assembly, homodimer. FMN serves as cofactor.

Its function is as follows. Has NAD(P)H-dependent FMN reductase activity. The polypeptide is NAD(P)H-dependent FMN reductase PA1204 (Pseudomonas aeruginosa (strain ATCC 15692 / DSM 22644 / CIP 104116 / JCM 14847 / LMG 12228 / 1C / PRS 101 / PAO1)).